A 485-amino-acid chain; its full sequence is Ribosomal protein uS12 methylthiotransferase RimO (485 aa).

The 111-residue stretch at 14 to 124 folds into the MTTase N-terminal domain; sequence PKVGFISLGC…VMAHVRELLP (111 aa). Residues Cys23, Cys59, Cys88, Cys167, Cys171, and Cys174 each contribute to the [4Fe-4S] cluster site. A Radical SAM core domain is found at 153-389; the sequence is LTPRHYAYVK…MEVAQRISRE (237 aa). A TRAM domain is found at 392–468; sequence AEKVGRVLDV…EYDLYGEVIH (77 aa).

The protein belongs to the methylthiotransferase family. RimO subfamily. It depends on [4Fe-4S] cluster as a cofactor.

It localises to the cytoplasm. The catalysed reaction is L-aspartate(89)-[ribosomal protein uS12]-hydrogen + (sulfur carrier)-SH + AH2 + 2 S-adenosyl-L-methionine = 3-methylsulfanyl-L-aspartate(89)-[ribosomal protein uS12]-hydrogen + (sulfur carrier)-H + 5'-deoxyadenosine + L-methionine + A + S-adenosyl-L-homocysteine + 2 H(+). Catalyzes the methylthiolation of an aspartic acid residue of ribosomal protein uS12. The polypeptide is Ribosomal protein uS12 methylthiotransferase RimO (Deinococcus geothermalis (strain DSM 11300 / CIP 105573 / AG-3a)).